The primary structure comprises 356 residues: DNA polymerase IV (356 aa).

Residues 6 to 187 (IIHIDMDYFF…LDIGDFPGVG (182 aa)) enclose the UmuC domain. Positions 10 and 105 each coordinate Mg(2+). Residue Glu-106 is part of the active site.

Belongs to the DNA polymerase type-Y family. In terms of assembly, monomer. Mg(2+) serves as cofactor.

The protein localises to the cytoplasm. The catalysed reaction is DNA(n) + a 2'-deoxyribonucleoside 5'-triphosphate = DNA(n+1) + diphosphate. Poorly processive, error-prone DNA polymerase involved in untargeted mutagenesis. Copies undamaged DNA at stalled replication forks, which arise in vivo from mismatched or misaligned primer ends. These misaligned primers can be extended by PolIV. Exhibits no 3'-5' exonuclease (proofreading) activity. May be involved in translesional synthesis, in conjunction with the beta clamp from PolIII. This is DNA polymerase IV from Staphylococcus aureus (strain MRSA252).